The chain runs to 445 residues: Mitochondrial enolase superfamily member 1 (445 aa).

Residues Gly24–Asp26, Tyr34, and Lys220 contribute to the substrate site. Lys222 functions as the Proton donor/acceptor in the catalytic mechanism. Asp250 is a binding site for Mg(2+). Substrate-binding positions include Asn252, Glu276, Glu305, His355–Gly357, and Glu386. Positions 276 and 305 each coordinate Mg(2+). His355 is a catalytic residue.

Belongs to the mandelate racemase/muconate lactonizing enzyme family. ENOSF1 subfamily. The cofactor is Mg(2+).

It is found in the mitochondrion. The catalysed reaction is L-fuconate = 2-dehydro-3-deoxy-L-fuconate + H2O. Its function is as follows. Plays a role in the catabolism of L-fucose, a sugar that is part of the carbohydrates that are attached to cellular glycoproteins. Catalyzes the dehydration of L-fuconate to 2-keto-3-deoxy-L-fuconate by the abstraction of the 2-proton to generate an enediolate intermediate that is stabilized by the magnesium ion. May down-regulate thymidylate synthase activity, possibly already at the RNA level, by promoting the degradation of TYMS mRNA via an antisense RNA-based mechanism. The polypeptide is Mitochondrial enolase superfamily member 1 (enosf1) (Xenopus laevis (African clawed frog)).